We begin with the raw amino-acid sequence, 279 residues long: Large ribosomal subunit protein uL2 (279 aa).

The segment at 223–279 (MAMNPVDHPMGGGEGKSKSGGGRKHPKSPWGQLAKGLKTRNKKKASSKLIVRGRKSK) is disordered. The span at 232 to 242 (MGGGEGKSKSG) shows a compositional bias: gly residues. The segment covering 259-279 (LKTRNKKKASSKLIVRGRKSK) has biased composition (basic residues).

Belongs to the universal ribosomal protein uL2 family. As to quaternary structure, part of the 50S ribosomal subunit. Forms a bridge to the 30S subunit in the 70S ribosome.

Its function is as follows. One of the primary rRNA binding proteins. Required for association of the 30S and 50S subunits to form the 70S ribosome, for tRNA binding and peptide bond formation. It has been suggested to have peptidyltransferase activity; this is somewhat controversial. Makes several contacts with the 16S rRNA in the 70S ribosome. This Prosthecochloris aestuarii (strain DSM 271 / SK 413) protein is Large ribosomal subunit protein uL2.